The primary structure comprises 325 residues: MSDSASWQPSAPIANLLKRAAIVGQIRRFFSDRGLLEVETPAMSQATVTDIHLVPFQTCFIGPGAAGGMPLYLMTSPEYHMKRLLAAGSGPLFQLCRSFRNEEAGRYHNPEFTMLEWYRPHYDMYRLMNEVDDLLQQILDCDSAETLSYQQVFTRHVGIDPLSADKAQLYDAAVKWDLGEAASVEDDRDTLLQLLFAMVVEPNIGHDKPAFVYHFPASQAALAEISTEDHRVADRFEAYFKGIELANGFCELTDAREQRQRFEQDNRKRVAMKLSEQPIDENLLAALAQGMPECSGVALGVDRLVMLALKADRLSDVIAFAVERA.

Position 76–78 (76–78 (SPE)) interacts with substrate. Residues 100 to 102 (RNE) and N109 each bind ATP. A substrate-binding site is contributed by Y118. Residue 244 to 245 (EL) coordinates ATP. E251 contacts substrate. G300 lines the ATP pocket.

Belongs to the class-II aminoacyl-tRNA synthetase family. EpmA subfamily. In terms of assembly, homodimer.

The enzyme catalyses D-beta-lysine + L-lysyl-[protein] + ATP = N(6)-((3R)-3,6-diaminohexanoyl)-L-lysyl-[protein] + AMP + diphosphate + H(+). Functionally, with EpmB is involved in the beta-lysylation step of the post-translational modification of translation elongation factor P (EF-P). Catalyzes the ATP-dependent activation of (R)-beta-lysine produced by EpmB, forming a lysyl-adenylate, from which the beta-lysyl moiety is then transferred to the epsilon-amino group of a conserved specific lysine residue in EF-P. In Sodalis glossinidius (strain morsitans), this protein is Elongation factor P--(R)-beta-lysine ligase.